A 1180-amino-acid chain; its full sequence is MLDVNNFDRMRIGLASPDLIRQWSSGEVKKPETINYRTLKPERDGLFCERIFGPTRDWECHCGKYKRVRYKGIVCDRCGVEVTRSKVRRERLGHIELAAPVSHIWYFKGIPSRMGLLLDMSPRSLEKVLYFVAYIVIEQGDTPLMKKQLLTETEYREHREKYGNRFRAGMGAEAIKELLVEMDLEQLCRELRQELKEVTGQRKVRAIRRLEVVEAFKNSGNRPEWMIMDVIPVIPPELRPMVQLDGGRFATSDLNDLYRRVINRNNRLKRLLDLGAPDIIVRNEKRMLQEAVDALIDNGRRGRPVTGPGNRPLKSLSDMLKGKQGRFRQNLLGKRVDYSGRSVIVVGPELKLHQCGLPKEMALELFKPFVMKKLVEDGHAHNIKSAKRMVERVKNEVWDVLEDVIAEHPVLLNRAPTLHRLGIQAFEPVLVEGRALQIHPLVCTAYNADFDGDQMAVHVPLSAEAQAEARNLMLSAHNILNPKDGRPVATPTQDMVIGSYYLTIEREGAKGENMIFASPDEAIAAYDAKSVHLQARIRVRPTARLQEALEFAKSEARSFDEQGRLMTTVGRLIFNSVIPPKVGYVNEVVGKKQLGNIVARCYDKLGISETAAMLDGIKKLGYTFSTRAGITVGITDVEVPEEKRRLIAEADSFVEKVEQQYRRGLITEEERYQKVIDIWNKTTDGVTQALMRTLDKFNPVYMMANSGARGNIQQIRQLAGMRGLMADPSGRIIDLPIKANFREGLTVLEYFISTHGARKGLADTALRTADSGYLTRRLVDVSQDVIVREIDCGTHEGIPVEAIVDGKQVIEKLSDRLTGRYALEEIVDPETGEKLAAYNEEIQADAAERIDQLIKQGKLAHNAVYIRSVLTCRTRYGVCRRCYGRNLATGRSVEIGEAVGIIAAQSIGEPGTQLTMRTFHTGGVAGDDITQGLPRVEELFEARKPKGLAIIAEQDGIVRIVDNKGRKDIEIVTDDGESHHYAIPYNSRLKVEDGQRVQAGTELTEGSVNPHDMLRVKGIQGVQTYLLREVQRVYRLQGVDINDKHIEVMVRQMMRKVKVEEPGDTDLLPGGLIDIADFEAENLKAIEAGLEPATARPILLGITKASLATDSFLSAASFQETTRVLTEAAIKGKVDPLLGLKENVIIGKLIPAGTGMSRYRNIQVLVGDEIDEARLEDGMA.

Zn(2+) contacts are provided by C60, C62, C75, and C78. Residues D449, D451, and D453 each coordinate Mg(2+). Zn(2+) contacts are provided by C792, C872, C879, and C882.

This sequence belongs to the RNA polymerase beta' chain family. As to quaternary structure, the RNAP catalytic core consists of 2 alpha, 1 beta, 1 beta' and 1 omega subunit. When a sigma factor is associated with the core the holoenzyme is formed, which can initiate transcription. Mg(2+) is required as a cofactor. Requires Zn(2+) as cofactor.

It catalyses the reaction RNA(n) + a ribonucleoside 5'-triphosphate = RNA(n+1) + diphosphate. Its function is as follows. DNA-dependent RNA polymerase catalyzes the transcription of DNA into RNA using the four ribonucleoside triphosphates as substrates. The chain is DNA-directed RNA polymerase subunit beta' from Heliobacterium modesticaldum (strain ATCC 51547 / Ice1).